The primary structure comprises 241 residues: Chloride intracellular channel protein 1 (241 aa).

Ala2 carries the post-translational modification N-acetylalanine. The required for insertion into the membrane stretch occupies residues 2–90 (AEEQPQVELF…EEFLEAVLCP (89 aa)). Lys13 is subject to N6-acetyllysine. The short motif at 24–27 (CPFS) is the G-site element. Cysteines 24 and 59 form a disulfide. The chain crosses the membrane as a helical span at residues 26-46 (FSQRLFMVLWLKGVTFNVTTV). Positions 93–233 (YPKLAALNPE…PDDEEIELAY (141 aa)) constitute a GST C-terminal domain. Lys119 carries the N6-acetyllysine modification. Ser121 carries the post-translational modification Phosphoserine. An N6-acetyllysine modification is found at Lys131. Ser156 is modified (phosphoserine). The residue at position 233 (Tyr233) is a Phosphotyrosine.

It belongs to the chloride channel CLIC family. In terms of assembly, monomer. Homodimer (in vitro). Interacts with TRAPPC2. Dimerization requires a conformation change that leads to the exposure of a large hydrophobic surface. In vivo, this may lead to membrane insertion.

It is found in the nucleus. The protein resides in the nucleus membrane. Its subcellular location is the cytoplasm. It localises to the cell membrane. The protein localises to the endoplasmic reticulum. It catalyses the reaction L-dehydroascorbate + 2 glutathione = glutathione disulfide + L-ascorbate. The enzyme catalyses chloride(in) = chloride(out). It carries out the reaction iodide(out) = iodide(in). The catalysed reaction is thiocyanate(in) = thiocyanate(out). It catalyses the reaction nitrate(in) = nitrate(out). The enzyme catalyses bromide(in) = bromide(out). It carries out the reaction fluoride(in) = fluoride(out). In terms of biological role, in the soluble state, catalyzes glutaredoxin-like thiol disulfide exchange reactions with reduced glutathione as electron donor. Reduces selenite and dehydroascorbate and may act as an antioxidant during oxidative stress response. Can insert into membranes and form voltage-dependent multi-ion conductive channels. Membrane insertion seems to be redox-regulated and may occur only under oxidizing conditions. Involved in regulation of the cell cycle. This is Chloride intracellular channel protein 1 (CLIC1) from Bos taurus (Bovine).